The following is a 1193-amino-acid chain: Protogenin (1193 aa).

The N-terminal stretch at 1-23 is a signal peptide; it reads MAPPVRPGMLPLLLLLLLPPLGS. Ig-like domains follow at residues 24–124, 126–217, 230–317, and 322–406; these read VPGV…AHLT, STIS…ASLT, PTII…ATLT, and PSFV…ARLT. Residues 24–944 are Extracellular-facing; that stretch reads VPGVWSFSEL…YYHLDQKSMT (921 aa). Cystine bridges form between Cys54/Cys107 and Cys150/Cys200. Asn84 is a glycosylation site (N-linked (GlcNAc...) asparagine). N-linked (GlcNAc...) asparagine glycosylation is present at Asn238. Cystine bridges form between Cys251–Cys299 and Cys343–Cys390. Fibronectin type-III domains are found at residues 416 to 510, 512 to 608, 613 to 712, 719 to 812, and 817 to 912; these read APYN…TLED, PLRP…TPKA, APKS…VRDR, PPHH…TLPE, and PPVG…VLPK. N-linked (GlcNAc...) asparagine glycosylation occurs at Asn625. A helical transmembrane segment spans residues 945-965; that stretch reads GIAVGVGIALTCILICVLILI. Topologically, residues 966 to 1193 are cytoplasmic; the sequence is YRSKARKSSA…LRHAAESVPV (228 aa). 2 disordered regions span residues 974–1018 and 1078–1193; these read SASK…PMMP and VLIS…SVPV. Polar residues-rich tracts occupy residues 978–990 and 1086–1095; these read TTQS…SRAS and PSSPGQTTSF. The span at 1105 to 1133 shows a compositional bias: basic and acidic residues; the sequence is DTEHSANSEGSHETGDSGRFSHESNDEIH. Residues 1136–1150 show a composition bias toward polar residues; that stretch reads SVISSTPPTSNSLTC.

Belongs to the immunoglobulin superfamily. DCC family.

The protein localises to the membrane. Functionally, may play a role in anteroposterior axis elongation. The chain is Protogenin from Rattus norvegicus (Rat).